The primary structure comprises 284 residues: ATP synthase gamma chain (284 aa).

This sequence belongs to the ATPase gamma chain family. As to quaternary structure, F-type ATPases have 2 components, CF(1) - the catalytic core - and CF(0) - the membrane proton channel. CF(1) has five subunits: alpha(3), beta(3), gamma(1), delta(1), epsilon(1). CF(0) has three main subunits: a, b and c.

It localises to the cell membrane. In terms of biological role, produces ATP from ADP in the presence of a proton gradient across the membrane. The gamma chain is believed to be important in regulating ATPase activity and the flow of protons through the CF(0) complex. The polypeptide is ATP synthase gamma chain (Pelotomaculum thermopropionicum (strain DSM 13744 / JCM 10971 / SI)).